The sequence spans 139 residues: MSESYQKLRKDFKELDFTDRLTFLAESLLLTGQSAIVGGLEVAGRVVETVTGTVGSLIDASGITNILGGSGGVVGETIDRVAITVKDVSRSAGELYNDAVRNVENATSNAAKAVGDVGVSASEAVKNIAGSFQKTTGNK.

The protein resides in the chlorosome. The protein is Chlorosome protein C (csmC) of Chlorobaculum tepidum (strain ATCC 49652 / DSM 12025 / NBRC 103806 / TLS) (Chlorobium tepidum).